A 728-amino-acid chain; its full sequence is MALYRRGTASMDADGTVHGTDTKWKDQLALIRVGATIVFLEQPIKLAVISDIVSDTELKAISTDGQTAADGKYVILLNDSLTVNGLAQNVAETLRYYQSKETEIASALDIIADLDMDNLNNIVQEIKSNKSAAEAAQNQAELARDSANSARDESISIKNQTQQISDSAIGSINAAKDKAITNVQQKENSAVTHINSEEAAAIQAINDAKGDLSGYVNDAQTAAQTATSAKNDAQAARDAAVSAKDAAAVSAQEAQDAANSVNADNLLTKDGNLSGLADKEQSKKNLAVNRLNQPRGDLTEIYSNDDRTGFKLIVKDSGDWGAMTHDGSENKALGVNFGGTGGTTEEQARTSLKVYKLDRTNLGEKHLDSITGEGDGPGIYMQSSSALATASRGYPEATAGMLEVLPNGANGASACIQRFTPFTYLGTAPESGNSQNEYARAGRGTFYIRMKNGNNAKFSPWIPFQASSSGNVVSSPASNEKSSWVDYVNALSSQPSSLASYNVNSVGWVTAISVRHRNGQGDGSAFGFVIEDASMTSPHYKDVRLRKQTGAGQWQSTQVIWNTGNTTVDSNGFIKRASPIVDIFGNGSHRTNDESEGCTVERISTGEYLIRGCLSLNSDLAWGGVNGGIEIPKDINGQPILWVDYDVNPDGSLVIKTYHRTHDNAPSFARNHKDGYSDGDPIDIPSDVFVSVRVEMPNDSIYNKKVEECKRNHERMVSGEFVESLKNT.

The protein resides in the virion. Probable tail fiber protein. The polypeptide is Probable tail fiber protein (Escherichia coli (Bacteriophage T1)).